Consider the following 416-residue polypeptide: Tyrosine--tRNA ligase (416 aa).

The short motif at 55 to 64 (PTGSEIHLGH) is the 'HIGH' region element. A 'KMSKS' region motif is present at residues 249 to 253 (KMSKS). Residue K252 coordinates ATP. The region spanning 352–416 (TKAFHLLSSI…GKKTFRRISN (65 aa)) is the S4 RNA-binding domain.

It belongs to the class-I aminoacyl-tRNA synthetase family. TyrS type 2 subfamily. As to quaternary structure, homodimer.

The protein localises to the cytoplasm. The enzyme catalyses tRNA(Tyr) + L-tyrosine + ATP = L-tyrosyl-tRNA(Tyr) + AMP + diphosphate + H(+). Functionally, catalyzes the attachment of tyrosine to tRNA(Tyr) in a two-step reaction: tyrosine is first activated by ATP to form Tyr-AMP and then transferred to the acceptor end of tRNA(Tyr). The polypeptide is Tyrosine--tRNA ligase (Prochlorococcus marinus (strain SARG / CCMP1375 / SS120)).